We begin with the raw amino-acid sequence, 393 residues long: Cytochrome b (393 aa).

Residues 1-33 are Mitochondrial matrix-facing; it reads MTIRNQRFSLLKQPISSTLNQHLVDYPTPSNLS. The helical transmembrane segment at 34–57 threads the bilayer; that stretch reads YWWGFGSLAGICLVIQIVTGVFLA. The Mitochondrial intermembrane portion of the chain corresponds to 58-80; that stretch reads MHYTPHVDLAFNSVEHIMRDVEG. A helical transmembrane segment spans residues 81–108; sequence GWLLRYMHANGASMFFIVVYLHIFRGLY. Heme b is bound by residues His88 and His102. Topologically, residues 109-116 are mitochondrial matrix; it reads YASYSSPR. The helical transmembrane segment at 117 to 141 threads the bilayer; sequence EFVWCLGVVIFLLMIVTAFIGYVLP. The Mitochondrial intermembrane segment spans residues 142–178; that stretch reads WGQMSFWGATVITSLASAIPVVGDTIVTWLWGGFSVD. Residues 179–210 traverse the membrane as a helical segment; sequence NATLNRFFSLHYLLPFILVGASLLHLAALHQY. Heme b is bound by residues His189 and His203. His208 is a binding site for a ubiquinone. The Mitochondrial matrix portion of the chain corresponds to 211–229; sequence GSNNPLGVHSEMDKIAFYP. The chain crosses the membrane as a helical span at residues 230–252; the sequence is YFYVKDLVGWVAFAIFFSIWIFY. The Mitochondrial intermembrane portion of the chain corresponds to 253–293; it reads APNVLGHPDNYIPANPMSTPPHIVPEWYFLPIYAILRSIPD. Residues 294–314 traverse the membrane as a helical segment; the sequence is KAGGVAAIALVFICLLALPFF. Residues 315 to 325 are Mitochondrial matrix-facing; sequence KSMYVRSSSFR. A helical membrane pass occupies residues 326-346; sequence PIYQGMFWLLLADCLLLGWIG. Residues 347 to 353 are Mitochondrial intermembrane-facing; that stretch reads CQPVEAP. Residues 354–370 traverse the membrane as a helical segment; that stretch reads FVTIGQISSLVFFLFFA. Topologically, residues 371–393 are mitochondrial matrix; the sequence is ITPILGRVGRGIPNSYTDETDHT.

It belongs to the cytochrome b family. As to quaternary structure, component of the ubiquinol-cytochrome c oxidoreductase (cytochrome b-c1 complex, complex III, CIII), a multisubunit enzyme composed of 10 subunits. The complex is composed of 3 respiratory subunits cytochrome b (MT-CYB), cytochrome c1 (CYC1-1 or CYC1-2) and Rieske protein (UCR1-1 or UCR1-2), 2 core protein subunits MPPalpha1 (or MPPalpha2) and MPPB, and 5 low-molecular weight protein subunits QCR7-1 (or QCR7-2), UCRQ-1 (or UCRQ-2), QCR9, UCRY and probably QCR6-1 (or QCR6-2). The complex exists as an obligatory dimer and forms supercomplexes (SCs) in the inner mitochondrial membrane with NADH-ubiquinone oxidoreductase (complex I, CI), resulting in different assemblies (supercomplexes SCI(1)III(2) and SCI(2)III(4)). Requires heme b as cofactor.

Its subcellular location is the mitochondrion inner membrane. Functionally, component of the ubiquinol-cytochrome c oxidoreductase, a multisubunit transmembrane complex that is part of the mitochondrial electron transport chain which drives oxidative phosphorylation. The respiratory chain contains 3 multisubunit complexes succinate dehydrogenase (complex II, CII), ubiquinol-cytochrome c oxidoreductase (cytochrome b-c1 complex, complex III, CIII) and cytochrome c oxidase (complex IV, CIV), that cooperate to transfer electrons derived from NADH and succinate to molecular oxygen, creating an electrochemical gradient over the inner membrane that drives transmembrane transport and the ATP synthase. The cytochrome b-c1 complex catalyzes electron transfer from ubiquinol to cytochrome c, linking this redox reaction to translocation of protons across the mitochondrial inner membrane, with protons being carried across the membrane as hydrogens on the quinol. In the process called Q cycle, 2 protons are consumed from the matrix, 4 protons are released into the intermembrane space and 2 electrons are passed to cytochrome c. Cytochrome b is a catalytic core subunit containing 2 b-type hemes BL and BH topographically segregated in the quinone reduction (Qi) and quinol oxidation (Q0) sites on opposite sides of the membrane. This chain is Cytochrome b (MT-CYB), found in Arabidopsis thaliana (Mouse-ear cress).